Here is a 482-residue protein sequence, read N- to C-terminus: Methylenetetrahydrofolate--tRNA-(uracil-5-)-methyltransferase TrmFO (482 aa).

An FAD-binding site is contributed by 11-16; that stretch reads GGGLAG. Positions 450 to 482 are disordered; it reads LRQPSPWSAEDSPRAALPIPEPTPLGPASGSSE.

This sequence belongs to the MnmG family. TrmFO subfamily. Requires FAD as cofactor.

It localises to the cytoplasm. It carries out the reaction uridine(54) in tRNA + (6R)-5,10-methylene-5,6,7,8-tetrahydrofolate + NADH + H(+) = 5-methyluridine(54) in tRNA + (6S)-5,6,7,8-tetrahydrofolate + NAD(+). The enzyme catalyses uridine(54) in tRNA + (6R)-5,10-methylene-5,6,7,8-tetrahydrofolate + NADPH + H(+) = 5-methyluridine(54) in tRNA + (6S)-5,6,7,8-tetrahydrofolate + NADP(+). Its function is as follows. Catalyzes the folate-dependent formation of 5-methyl-uridine at position 54 (M-5-U54) in all tRNAs. The protein is Methylenetetrahydrofolate--tRNA-(uracil-5-)-methyltransferase TrmFO of Rhodospirillum rubrum (strain ATCC 11170 / ATH 1.1.1 / DSM 467 / LMG 4362 / NCIMB 8255 / S1).